The following is a 480-amino-acid chain: Glycogen synthase (480 aa).

Residue K15 participates in ADP-alpha-D-glucose binding.

It belongs to the glycosyltransferase 1 family. Bacterial/plant glycogen synthase subfamily.

It carries out the reaction [(1-&gt;4)-alpha-D-glucosyl](n) + ADP-alpha-D-glucose = [(1-&gt;4)-alpha-D-glucosyl](n+1) + ADP + H(+). It participates in glycan biosynthesis; glycogen biosynthesis. Its function is as follows. Synthesizes alpha-1,4-glucan chains using ADP-glucose. This chain is Glycogen synthase, found in Rhizobium johnstonii (strain DSM 114642 / LMG 32736 / 3841) (Rhizobium leguminosarum bv. viciae).